A 436-amino-acid polypeptide reads, in one-letter code: GTPase Der (436 aa).

EngA-type G domains lie at 4–167 (PTVA…PTEA) and 175–351 (IKFS…QSQN). GTP-binding positions include 10–17 (GRPNVGKS), 57–61 (DTGGI), 119–122 (NKVD), 181–188 (GRPNVGKS), 229–233 (DTAGM), and 294–297 (NKWD). One can recognise a KH-like domain in the interval 352-436 (TRIPSAVLND…PIRLIARKRK (85 aa)).

Belongs to the TRAFAC class TrmE-Era-EngA-EngB-Septin-like GTPase superfamily. EngA (Der) GTPase family. In terms of assembly, associates with the 50S ribosomal subunit.

Its function is as follows. GTPase that plays an essential role in the late steps of ribosome biogenesis. This is GTPase Der from Streptococcus mutans serotype c (strain ATCC 700610 / UA159).